Consider the following 229-residue polypeptide: Uracil-DNA glycosylase (229 aa).

The active-site Proton acceptor is aspartate 67.

This sequence belongs to the uracil-DNA glycosylase (UDG) superfamily. UNG family.

It is found in the cytoplasm. It carries out the reaction Hydrolyzes single-stranded DNA or mismatched double-stranded DNA and polynucleotides, releasing free uracil.. Excises uracil residues from the DNA which can arise as a result of misincorporation of dUMP residues by DNA polymerase or due to deamination of cytosine. The chain is Uracil-DNA glycosylase from Coxiella burnetii (strain CbuK_Q154) (Coxiella burnetii (strain Q154)).